A 104-amino-acid chain; its full sequence is Flagellar hook-basal body complex protein FliE (104 aa).

It belongs to the FliE family.

It localises to the bacterial flagellum basal body. The protein is Flagellar hook-basal body complex protein FliE of Serratia proteamaculans (strain 568).